The chain runs to 283 residues: Aldo-keto reductase Mmcs_1938 (283 aa).

The active-site Proton donor is the Tyr-58. Residues Gly-196, Leu-198, Val-200, Ile-236, Arg-238, Ser-239, Ala-240, Arg-244, Ser-247, Asn-248, and Arg-274 each contribute to the NADPH site.

The protein belongs to the aldo/keto reductase family.

The sequence is that of Aldo-keto reductase Mmcs_1938 from Mycobacterium sp. (strain MCS).